The following is a 71-amino-acid chain: Lantibiotic Flvbeta.c (71 aa).

The propeptide at 1-33 (MENKFDMEKFKKLAAVVSEDELDTLLDETTVGA) is cleaved by FlvT. The lanthionine (Ser-Cys); by FlvM2 cross-link spans 35-39 (SSNDC). Serine 36 is modified (2,3-didehydroalanine (Ser); by FlvM2). Cross-links (beta-methyllanthionine (Thr-Cys); by FlvM2) lie at residues 54 to 60 (TSKFDWC), 62 to 65 (TGAC), and 66 to 69 (TTSC).

In terms of processing, contains LL-lanthionine and DL-beta-methyllanthionine, when coepressed in E.coli with the flavecin synthetase FlvM2.

The protein resides in the secreted. Lanthionine-containing peptide antibiotic (lantibiotic) that is probably active on Gram-positive bacteria, since its analog [Del1]Flvbeta.c shows antibacterial activity against M.luteus. This activity is not synergistically enhanced by [Del2]Flvalpha.a, an analog of Flvalpha.a, which is encoded by the same operon than Flvbeta.c. The bactericidal activity of lantibiotics is based on depolarization of energized bacterial cytoplasmic membranes, initiated by the formation of aqueous transmembrane pores. This chain is Lantibiotic Flvbeta.c, found in Ruminococcus flavefaciens.